The primary structure comprises 442 residues: Histidine--tRNA ligase (442 aa).

It belongs to the class-II aminoacyl-tRNA synthetase family. In terms of assembly, homodimer.

The protein localises to the cytoplasm. It carries out the reaction tRNA(His) + L-histidine + ATP = L-histidyl-tRNA(His) + AMP + diphosphate + H(+). The protein is Histidine--tRNA ligase of Psychrobacter arcticus (strain DSM 17307 / VKM B-2377 / 273-4).